Here is an 83-residue protein sequence, read N- to C-terminus: MGMRMMFTLFLLAVLSTTVVSFTLDRASNGRDAAADSKAADQIAQTVRDECCSNPSCAQTHPEICRRTLMLQNPLNHDMSPSA.

A signal peptide spans 1 to 21; the sequence is MGMRMMFTLFLLAVLSTTVVS. Positions 22–48 are excised as a propeptide; sequence FTLDRASNGRDAAADSKAADQIAQTVR. Disulfide bonds link C51–C57 and C52–C65. The interval 53-55 is ser-Xaa-Pro motif, crucial for potent interaction with nAChR; sequence SNP. The propeptide occupies 66–83; that stretch reads RRTLMLQNPLNHDMSPSA.

Belongs to the conotoxin A superfamily. In terms of tissue distribution, expressed by the venom duct.

It is found in the secreted. Alpha-conotoxins bind to the nicotinic acetylcholine receptors (nAChR) and inhibit them. A synthetic amidated version of this toxin potently and preferentially antagonizes neuronal rat alpha-3-beta-2 (IC(50)=55.7 nM) and alpha-6/alpha-3-beta-4 (IC(50)=90.69 nM) nAChRs. This is Alpha-conotoxin QcIA from Conus quercinus (Oak cone).